A 212-amino-acid chain; its full sequence is Thymidylate kinase (212 aa).

ATP is bound at residue 11–18 (GPEGAGKT).

The protein belongs to the thymidylate kinase family.

It carries out the reaction dTMP + ATP = dTDP + ADP. Functionally, phosphorylation of dTMP to form dTDP in both de novo and salvage pathways of dTTP synthesis. This is Thymidylate kinase from Streptococcus pneumoniae serotype 19F (strain G54).